The primary structure comprises 526 residues: ATP synthase subunit alpha (526 aa).

171–178 (GDRQTGKT) serves as a coordination point for ATP.

This sequence belongs to the ATPase alpha/beta chains family. F-type ATPases have 2 components, CF(1) - the catalytic core - and CF(0) - the membrane proton channel. CF(1) has five subunits: alpha(3), beta(3), gamma(1), delta(1), epsilon(1). CF(0) has four main subunits: a(1), b(1), b'(1) and c(9-12).

It localises to the cell inner membrane. It catalyses the reaction ATP + H2O + 4 H(+)(in) = ADP + phosphate + 5 H(+)(out). Produces ATP from ADP in the presence of a proton gradient across the membrane. The alpha chain is a regulatory subunit. This is ATP synthase subunit alpha from Chlorobaculum tepidum (strain ATCC 49652 / DSM 12025 / NBRC 103806 / TLS) (Chlorobium tepidum).